A 172-amino-acid chain; its full sequence is Adenine phosphoribosyltransferase (172 aa).

The protein belongs to the purine/pyrimidine phosphoribosyltransferase family. As to quaternary structure, homodimer.

The protein resides in the cytoplasm. It carries out the reaction AMP + diphosphate = 5-phospho-alpha-D-ribose 1-diphosphate + adenine. It functions in the pathway purine metabolism; AMP biosynthesis via salvage pathway; AMP from adenine: step 1/1. In terms of biological role, catalyzes a salvage reaction resulting in the formation of AMP, that is energically less costly than de novo synthesis. The protein is Adenine phosphoribosyltransferase of Alkaliphilus oremlandii (strain OhILAs) (Clostridium oremlandii (strain OhILAs)).